The following is a 273-amino-acid chain: Bidirectional sugar transporter SWEET1a (273 aa).

At 1 to 6 (MEHIAR) the chain is on the extracellular side. Residues 7 to 27 (FFFGVSGNVIALFLFLSPVVT) form a helical membrane-spanning segment. Residues 7-95 (FFFGVSGNVI…VIFLIFAERK (89 aa)) form the MtN3/slv 1 domain. Topologically, residues 28–42 (FWRIIKKRSTEDFSG) are cytoplasmic. The helical transmembrane segment at 43 to 63 (VPYNMTLLNCLLSAWYGLPFV) threads the bilayer. The Extracellular segment spans residues 64–71 (SPNNILVT). The chain crosses the membrane as a helical span at residues 72-92 (TINGTGSVIEAIYVVIFLIFA). Topologically, residues 93–101 (ERKARLKMM) are cytoplasmic. The chain crosses the membrane as a helical span at residues 102–122 (GLLGLVTSIFTMVVLVSLLAL). Residues 123 to 128 (HGQGRK) are Extracellular-facing. Residues 129–149 (LFCGLAATIFSICMYASPLSI) traverse the membrane as a helical segment. Residues 131 to 214 (CGLAATIFSI…ILYAIYRNHK (84 aa)) enclose the MtN3/slv 2 domain. Residues 150–163 (MRLVIKTKSVEFMP) lie on the Cytoplasmic side of the membrane. Residues 164–184 (FLLSLSVFLCGTSWFIYGLLG) traverse the membrane as a helical segment. Over 185–188 (RDPF) the chain is Extracellular. A helical transmembrane segment spans residues 189-209 (IAIPNGCGSFLGLMQLILYAI). Over 210-273 (YRNHKGATPA…SADDKVASQV (64 aa)) the chain is Cytoplasmic.

This sequence belongs to the SWEET sugar transporter family. Forms homooligomers and/or heterooligomers.

It localises to the cell membrane. In terms of biological role, mediates both low-affinity uptake and efflux of sugar across the plasma membrane. The polypeptide is Bidirectional sugar transporter SWEET1a (SWEET1A) (Oryza sativa subsp. japonica (Rice)).